An 873-amino-acid polypeptide reads, in one-letter code: Cilia- and flagella-associated protein 58 (873 aa).

Coiled-coil stretches lie at residues 106-609 (VDSA…VISE) and 642-832 (ETQY…QKRK). The disordered stretch occupies residues 202–221 (QEIQHRQNEASRESRKKEKL). The span at 204–221 (IQHRQNEASRESRKKEKL) shows a compositional bias: basic and acidic residues.

Belongs to the CFAP58 family. In terms of assembly, interacts with ODFP2. In terms of tissue distribution, predominantly expressed in the testis. Also found at lower levels in ciliated cells and tissues such as neural progenitor cells and oviducts.

The protein localises to the cell projection. The protein resides in the cilium. It is found in the flagellum. It localises to the cytoplasm. Its subcellular location is the cytoskeleton. The protein localises to the microtubule organizing center. The protein resides in the centrosome. Has an essential role in the assembly and organization of the sperm flagellar axoneme. Required for the elongation of the primary cilium and sperm flagellar midpiece via modulation of the Notch signaling pathway. In Mus musculus (Mouse), this protein is Cilia- and flagella-associated protein 58.